A 181-amino-acid chain; its full sequence is Large ribosomal subunit protein uL6m (181 aa).

This sequence belongs to the universal ribosomal protein uL6 family.

Its subcellular location is the mitochondrion. The sequence is that of Large ribosomal subunit protein uL6m (RPL6) from Acanthamoeba castellanii (Amoeba).